The following is a 1007-amino-acid chain: Glutamate receptor ionotropic, delta-2 (1007 aa).

The signal sequence occupies residues 1–23 (MEVFPLLFFLSFWWSRTWDLATS). The interaction with CBLN1 homotrimer stretch occupies residues 24-345 (DSIIHIGAIF…NAFHKKLEDR (322 aa)). Residues 24 to 566 (DSIIHIGAIF…DMFACLAPFD (543 aa)) are Extracellular-facing. Cystine bridges form between Cys83/Cys355, Cys99/Cys131, and Cys298/Cys310. The N-linked (GlcNAc...) asparagine glycan is linked to Asn293. An N-linked (GlcNAc...) asparagine glycan is attached at Asn426. The chain crosses the membrane as a helical span at residues 567–587 (LSLWACIAGTVLLVGLLVYLL). Topologically, residues 588–635 (NWLNPPRLQMGSMTSTTLYNSMWFVYGSFVQQGGEVPYTTLATRMMMG) are cytoplasmic. The helical transmembrane segment at 636-656 (AWWLFALIVISSYTANLAAFL) threads the bilayer. Over 657-830 (TITRIESSIQ…QKGGALDIKS (174 aa)) the chain is Extracellular. Residues Asn713 and Asn716 are each glycosylated (N-linked (GlcNAc...) asparagine). Residues 831–851 (LAGVFCILAAGIVLSCLIAVL) traverse the membrane as a helical segment. The Cytoplasmic portion of the chain corresponds to 852-1007 (ETWWSRRKGS…GNDPDRGTSI (156 aa)). Ser883 carries the phosphoserine modification. Thr886 carries the phosphothreonine modification. Ser890 bears the Phosphoserine mark. Residues 921–991 (DFRNTHITTT…MSSIPYQPTP (71 aa)) are interaction with AP4M1. The short motif at 1005 to 1007 (TSI) is the PDZ-binding element. Position 1006 is a phosphoserine (Ser1006).

Belongs to the glutamate-gated ion channel (TC 1.A.10.1) family. GRID2 subfamily. As to quaternary structure, tetramer; dimer of dimers. Interacts with AP4M1. Interacts with EML2. Interacts with MAGI2 (via PDZ domains). Interacts with BECN1, GOPC, GRID2IP, SHANK1 and SHANK2. Interacts with CBLN2, but not with CBLN4. Interacts with CBLN1 (via C1q domain); the interaction is CBLN1-NRX1 complex formation-dependent; CBLN1-binding is calcium-independent; CBLN1 hexamers anchor GRID2 N-terminal domain dimers to monomeric NRXN1 isoform beta; promotes synaptogenesis and mediates the D-Serine-dependent long term depression signals and AMPA receptor endocytosis. Expressed at high levels in the cerebellar Purkinje cell layer, almost absent in the forebrain.

The protein resides in the postsynaptic cell membrane. The enzyme catalyses Ca(2+)(in) = Ca(2+)(out). It catalyses the reaction Na(+)(in) = Na(+)(out). In terms of biological role, member of the ionotropic glutamate receptor family, which plays a crucial role in synaptic organization and signal transduction in the central nervous system. Although it shares structural features with ionotropic glutamate receptors, does not bind glutamate as a primary ligand. Promotes synaptogenesis and mediates the D-Serine-dependent long term depression signals and AMPA receptor endocytosis of cerebellar parallel fiber-Purkinje cell (PF-PC) synapses through the NRX1B-CBLN1-GRID2 triad complex. In the presence of neurexins and cerebellins, forms cation-selective channels that are proposed to be gated by glycine and D-serine. However, recent research disputes this ligand-gated cation channel activity. Cation-selective ion channel activity can be triggered by GRM1 in Purkinje cells. In Rattus norvegicus (Rat), this protein is Glutamate receptor ionotropic, delta-2 (Grid2).